The chain runs to 24 residues: Small ribosomal subunit protein uS5 (24 aa).

The protein belongs to the universal ribosomal protein uS5 family. As to quaternary structure, part of the 30S ribosomal subunit. Contacts proteins S4 and S8.

Functionally, with S4 and S12 plays an important role in translational accuracy. In terms of biological role, located at the back of the 30S subunit body where it stabilizes the conformation of the head with respect to the body. The chain is Small ribosomal subunit protein uS5 (rpsE) from Vibrio proteolyticus (Aeromonas proteolytica).